Here is a 471-residue protein sequence, read N- to C-terminus: Glutamate--tRNA ligase (471 aa).

Residues 9 to 19 (PSPTGYLHVGG) carry the 'HIGH' region motif. The Zn(2+) site is built by cysteine 98, cysteine 100, cysteine 125, and histidine 127. Positions 237 to 241 (KLSKR) match the 'KMSKS' region motif. Residue lysine 240 participates in ATP binding.

This sequence belongs to the class-I aminoacyl-tRNA synthetase family. Glutamate--tRNA ligase type 1 subfamily. As to quaternary structure, monomer. The cofactor is Zn(2+).

Its subcellular location is the cytoplasm. The catalysed reaction is tRNA(Glu) + L-glutamate + ATP = L-glutamyl-tRNA(Glu) + AMP + diphosphate. Catalyzes the attachment of glutamate to tRNA(Glu) in a two-step reaction: glutamate is first activated by ATP to form Glu-AMP and then transferred to the acceptor end of tRNA(Glu). The protein is Glutamate--tRNA ligase of Escherichia coli (strain SMS-3-5 / SECEC).